A 512-amino-acid chain; its full sequence is Maturase K (512 aa).

It belongs to the intron maturase 2 family. MatK subfamily.

Its subcellular location is the plastid. It is found in the chloroplast. Functionally, usually encoded in the trnK tRNA gene intron. Probably assists in splicing its own and other chloroplast group II introns. The sequence is that of Maturase K from Dalea wrightii (Wright's prairie clover).